Here is a 313-residue protein sequence, read N- to C-terminus: Acetaldehyde dehydrogenase 1 (313 aa).

16 to 19 (SGNI) contributes to the NAD(+) binding site. The active-site Acyl-thioester intermediate is the Cys-131. NAD(+)-binding positions include 162–170 (SAGPGTRAN) and Asn-281.

This sequence belongs to the acetaldehyde dehydrogenase family.

It carries out the reaction acetaldehyde + NAD(+) + CoA = acetyl-CoA + NADH + H(+). The polypeptide is Acetaldehyde dehydrogenase 1 (Mycobacterium sp. (strain JLS)).